We begin with the raw amino-acid sequence, 777 residues long: Zinc finger FYVE domain-containing protein 1 (777 aa).

The segment at 416-777 is required for localization in the lipid droplets; it reads MAHSSFFPDE…FNCNKKPGDL (362 aa). 2 consecutive FYVE-type zinc fingers follow at residues 598–659 and 715–775; these read NSQI…DARN and DHEI…KKPG. The Zn(2+) site is built by Cys604, Cys607, Cys620, Cys623, Cys628, Cys631, Cys651, Cys654, Cys721, Cys724, Cys737, Cys740, Cys745, Cys748, Cys767, and Cys770.

As to quaternary structure, interacts with RAB18 (in GTP-bound form). Interacts with BSCL2 in a RAB18-dependent manner. Interacts with ZW10. As to expression, ubiquitous.

Its subcellular location is the golgi apparatus. It is found in the golgi stack. The protein resides in the endoplasmic reticulum. The protein localises to the preautophagosomal structure. It localises to the lipid droplet. Its subcellular location is the mitochondrion. In terms of biological role, plays a role in the formation of lipid droplets (LDs) which are storage organelles at the center of lipid and energy homeostasis. Regulates the morphology, size and distribution of LDs. Mediates the formation of endoplasmic reticulum-lipid droplets (ER-LD) contact sites by forming a complex with RAB18 and ZW10. Binds to phosphatidylinositol 3-phosphate (PtdIns3P) through FYVE-type zinc finger. The sequence is that of Zinc finger FYVE domain-containing protein 1 (Zfyve1) from Mus musculus (Mouse).